The following is a 193-amino-acid chain: uncharacterized protein (193 aa).

This is an uncharacterized protein from Acidianus convivator (ATV).